An 88-amino-acid polypeptide reads, in one-letter code: Large ribosomal subunit protein bL27 (88 aa).

A disordered region spans residues 1–21; sequence MAHKKGQGSTQNNRDSAGRRL.

Belongs to the bacterial ribosomal protein bL27 family.

This Helicobacter pylori (strain P12) protein is Large ribosomal subunit protein bL27.